Reading from the N-terminus, the 273-residue chain is Ribosomal RNA small subunit methyltransferase A (273 aa).

Residues Asn-18, Leu-20, Gly-45, Glu-66, Asp-91, and Asn-113 each contribute to the S-adenosyl-L-methionine site.

It belongs to the class I-like SAM-binding methyltransferase superfamily. rRNA adenine N(6)-methyltransferase family. RsmA subfamily.

Its subcellular location is the cytoplasm. The catalysed reaction is adenosine(1518)/adenosine(1519) in 16S rRNA + 4 S-adenosyl-L-methionine = N(6)-dimethyladenosine(1518)/N(6)-dimethyladenosine(1519) in 16S rRNA + 4 S-adenosyl-L-homocysteine + 4 H(+). Functionally, specifically dimethylates two adjacent adenosines (A1518 and A1519) in the loop of a conserved hairpin near the 3'-end of 16S rRNA in the 30S particle. May play a critical role in biogenesis of 30S subunits. The polypeptide is Ribosomal RNA small subunit methyltransferase A (Escherichia coli (strain SE11)).